We begin with the raw amino-acid sequence, 1027 residues long: Kinesin heavy chain isoform 5A (1027 aa).

Ala-2 carries the N-acetylalanine modification. The 319-residue stretch at 9-327 (SIKVLCRFRP…LMFGQRAKTI (319 aa)) folds into the Kinesin motor domain. 86-93 (GQTSSGKT) lines the ATP pocket. A microtubule-binding region spans residues 174–315 (VSSPEEILDV…PSSYNDAETK (142 aa)). The tract at residues 271–361 (EGTKSYVPYR…KTKAQKETIA (91 aa)) is necessary for interaction with ZFYVE27. A coiled-coil region spans residues 331–905 (ASVNLELTAE…EVDRIKEAVR (575 aa)). Positions 353–1027 (TKAQKETIAK…FPLHQETAAS (675 aa)) are interaction with BICD2. Position 397 is a phosphothreonine (Thr-397). Residues 906 to 936 (YKSSGKRGHSAQIAKPVRPGHYPASSPTNPY) form a disordered region. The globular stretch occupies residues 907-1027 (KSSGKRGHSA…FPLHQETAAS (121 aa)).

Belongs to the TRAFAC class myosin-kinesin ATPase superfamily. Kinesin family. Kinesin subfamily. In terms of assembly, oligomer composed of two heavy chains and two light chains. Interacts with GRIP1. Interacts with FMR1 (via C-terminus); this interaction is increased in a mGluR-dependent manner. Interacts with BORCS5. Interacts with ZFYVE27. Interacts with VAPA, VAPB, SURF4, RAB11A (GDP-bound form), RAB11B (GDP-bound form) and RTN3 in a ZFYVE27-dependent manner. Interacts with BICD2. Interacts with DTNB. As to expression, expressed in brain.

It localises to the cytoplasm. The protein localises to the perinuclear region. Its subcellular location is the cytoskeleton. It is found in the perikaryon. It catalyses the reaction ATP + H2O + a kinesin associated with a microtubule at position (n) = ADP + phosphate a kinesin associated with a microtubule at position (n+1, toward the plus end).. In terms of biological role, microtubule-dependent motor required for slow axonal transport of neurofilament proteins (NFH, NFM and NFL). Can induce formation of neurite-like membrane protrusions in non-neuronal cells in a ZFYVE27-dependent manner. The ZFYVE27-KIF5A complex contributes to the vesicular transport of VAPA, VAPB, SURF4, RAB11A, RAB11B and RTN3 proteins in neurons. Required for anterograde axonal transportation of MAPK8IP3/JIP3 which is essential for MAPK8IP3/JIP3 function in axon elongation. The polypeptide is Kinesin heavy chain isoform 5A (Rattus norvegicus (Rat)).